Consider the following 322-residue polypeptide: MPRELVNAKITHVSYVDKAANQKQFFIVKSEKQPDFQKEVRILAKEADEQKLVYGIVYEPDTVDAHGDFMTAAEIEKAAHGFLKDARQIDKQHDFQGGVGEVVESYVAPADFEMNGETIKKGSWVLVTKASEEVWEQIKKGEITGYSMAGTAETIEKQEKPVSQEKTDEKGLFNLLKNFFVGKQQQSYEEPVAKAGRKFSASNLQEIKNAHAALGNLLSQVETKEGEEEMTSEEVTKSIQEALEPIKKRLETLEKEEELNKKDKEKEEETEKEGEKLKKAISEAVQPLADRIEAIEKSRGTSKQTEESGSEQVQKSIWSGLF.

A coiled-coil region spans residues 205–286 (QEIKNAHAAL…LKKAISEAVQ (82 aa)). 2 stretches are compositionally biased toward basic and acidic residues: residues 254 to 281 (EKEE…KKAI) and 290 to 299 (DRIEAIEKSR). A disordered region spans residues 254–322 (EKEEELNKKD…VQKSIWSGLF (69 aa)). The span at 310–322 (SEQVQKSIWSGLF) shows a compositional bias: polar residues.

The protein to B.subtilis XkdF.

This is an uncharacterized protein from Bacillus subtilis (strain 168).